Here is a 442-residue protein sequence, read N- to C-terminus: F-box only protein 39 (442 aa).

Residues 16–61 form the F-box domain; it reads WAFLPDLCLCRVFWWLGDRDRSRAALVCRKWNQMMYSAELWRYRTI.

As to quaternary structure, directly interacts with SKP1 and CUL1.

In terms of biological role, substrate-recognition component of the SCF (SKP1-CUL1-F-box protein)-type E3 ubiquitin ligase complex. The chain is F-box only protein 39 (FBXO39) from Homo sapiens (Human).